The sequence spans 312 residues: Ribosomal RNA small subunit methyltransferase H (312 aa).

S-adenosyl-L-methionine is bound by residues 34–36 (GGH), Asp54, Leu83, Asp99, and Gln106.

Belongs to the methyltransferase superfamily. RsmH family.

It localises to the cytoplasm. The enzyme catalyses cytidine(1402) in 16S rRNA + S-adenosyl-L-methionine = N(4)-methylcytidine(1402) in 16S rRNA + S-adenosyl-L-homocysteine + H(+). Specifically methylates the N4 position of cytidine in position 1402 (C1402) of 16S rRNA. The polypeptide is Ribosomal RNA small subunit methyltransferase H (Rubrobacter xylanophilus (strain DSM 9941 / JCM 11954 / NBRC 16129 / PRD-1)).